The following is a 234-amino-acid chain: Cysteine proteinase inhibitor 6 (234 aa).

The signal sequence occupies residues 1–24; sequence MMRSRFLLFIVFFSLSLFISSLIA. Residue Met-2 is modified to N-acetylalanine. 2 consecutive Cystatin domains span residues 38 to 126 and 145 to 215; these read GGVG…KPAS and SGWR…FKVE. The short motif at 82 to 86 is the Secondary area of contact element; that stretch reads QVVAG. The interval 133–154 is disordered; it reads SSDLGCKQGEHESGWREVPGDD. Over residues 140–154 the composition is skewed to basic and acidic residues; sequence QGEHESGWREVPGDD. A Phosphoserine modification is found at Ser-174.

The protein belongs to the cystatin family. Phytocystatin subfamily.

It localises to the secreted. Its function is as follows. Specific inhibitor of cysteine proteinases. Probably involved in the regulation of endogenous processes and in defense against pests and pathogens. The protein is Cysteine proteinase inhibitor 6 (CYS6) of Arabidopsis thaliana (Mouse-ear cress).